Consider the following 622-residue polypeptide: Putative DEAD-box ATP-dependent RNA helicase 44 (622 aa).

The tract at residues 50–97 is disordered; it reads DRRSIVQISRSNSDNDDGNRPRDVKRERHRSHDHDRNRESDREFRERE. The segment covering 66 to 97 has biased composition (basic and acidic residues); it reads DGNRPRDVKRERHRSHDHDRNRESDREFRERE. In terms of domain architecture, Helicase ATP-binding spans 241 to 436; the sequence is IPLGLEQRDV…RKFLRNPVVV (196 aa). 254 to 261 serves as a coordination point for ATP; that stretch reads SATGSGKT. The short motif at 367-370 is the DEAD box element; that stretch reads DEAD. One can recognise a Helicase C-terminal domain in the interval 460–606; it reads RLKKLIDDLG…LVPPELARHE (147 aa).

The protein belongs to the DEAD box helicase family. DDX23/PRP28 subfamily.

The catalysed reaction is ATP + H2O = ADP + phosphate + H(+). The chain is Putative DEAD-box ATP-dependent RNA helicase 44 (RH44) from Arabidopsis thaliana (Mouse-ear cress).